The sequence spans 363 residues: Cyanide hydratase (363 aa).

Residues 6-285 (YKAACVTSEP…DGLLFVDIDL (280 aa)) form the CN hydrolase domain. E46 serves as the catalytic Proton acceptor. Residue K128 is part of the active site. Catalysis depends on C163, which acts as the Nucleophile.

This sequence belongs to the carbon-nitrogen hydrolase superfamily. Nitrilase family. Oligomer of dimers, forming left-handed helical fibers.

The catalysed reaction is formamide = hydrogen cyanide + H2O. In terms of biological role, catalyzes the hydration of cyanide to formamide. Degradation of cyanide may be important for plant pathogenic fungi in infection of cyanogenic plants. The sequence is that of Cyanide hydratase (CyhAB) from Alternaria brassicicola (Dark leaf spot agent).